Consider the following 1087-residue polypeptide: Kinesin-like protein KIN-14F (1087 aa).

The Calponin-homology (CH) domain maps to 1–110 (MDQGAMETLP…CILCLKGFYE (110 aa)). A disordered region spans residues 136 to 155 (SSPPQYGIGSESTTDESVSL). The 329-residue stretch at 377–705 (TIRVYCRVRP…LKFAQRVASI (329 aa)) folds into the Kinesin motor domain. 461–468 (GQTGSGKT) provides a ligand contact to ATP. Residues 710 to 749 (ARSNKETGEIRDLKDEISSLKSAMEKKEAELEQLRSGSIR) adopt a coiled-coil conformation. Disordered stretches follow at residues 740 to 858 (LEQL…PVSR), 923 to 949 (QGGV…FQKL), and 1004 to 1087 (DSTL…FMVP). Composition is skewed to polar residues over residues 744–754 (RSGSIRNTTEC), 780–797 (PQPN…CSTG), and 836–856 (TDRA…NLPV). Residues 1017 to 1033 (EPPSKSKNAQRNSSKNS) are compositionally biased toward polar residues. Residues 1042 to 1054 (YAHEDTSLVDDKP) show a composition bias toward basic and acidic residues. Over residues 1076 to 1087 (SRSTHHARFMVP) the composition is skewed to basic residues.

This sequence belongs to the TRAFAC class myosin-kinesin ATPase superfamily. Kinesin family. KIN-14 subfamily. As to quaternary structure, interacts (via C-terminus) with VDAC3. As to expression, expressed in roots, leaves, stems and flowers (at protein level).

The protein localises to the cytoplasm. It localises to the cytoskeleton. The protein resides in the mitochondrion. Required for keeping the ATP levels stable and balancing the aerobic respiration pathways during seed germination at low temperature. This chain is Kinesin-like protein KIN-14F, found in Arabidopsis thaliana (Mouse-ear cress).